A 128-amino-acid polypeptide reads, in one-letter code: Prefoldin subunit 1 (128 aa).

Coiled coils occupy residues 17–37 and 81–115; these read MIEL…KEGD and LKDS…LLQQ.

It belongs to the prefoldin subunit beta family. Heterohexamer of two PFD-alpha type and four PFD-beta type subunits forming prefoldin co-chaperone complex. Interacts with LSM8, a specific subunit of the LSM2-8 complex, which is a core component of the spliceosome.

It is found in the cytoplasm. The protein resides in the nucleus. Binds specifically to cytosolic chaperonin (c-CPN) and transfers target proteins to it. Binds to nascent polypeptide chain and promotes folding in an environment in which there are many competing pathways for nonnative proteins. Together with other chaperonins, contribute to the regulation of gene expression by modulating the spliceosome function on pre-mRNA splicing post-transcriptionally by acting as a co-chaperone of Hsp90 to control levels of LSM8. Required for microtubules (MTs) organization and dynamicity. Involved in the process leading to microtubules dissociation in response to gibberellic acid (GA) probably due to the DELLA proteins-mediated translocation of the prefoldin co-chaperone complex from the cytoplasm to the nucleus. This Arabidopsis thaliana (Mouse-ear cress) protein is Prefoldin subunit 1.